A 268-amino-acid chain; its full sequence is Kynurenine formamidase (268 aa).

An HGGXW motif is present at residues 33–37; the sequence is HGGGW. Ser-107 (nucleophile) is an active-site residue. Residues Asp-219 and His-251 contribute to the active site.

Belongs to the kynurenine formamidase family. Homodimer.

It catalyses the reaction N-formyl-L-kynurenine + H2O = L-kynurenine + formate + H(+). The protein operates within amino-acid degradation; L-tryptophan degradation via kynurenine pathway; L-kynurenine from L-tryptophan: step 2/2. Functionally, catalyzes the hydrolysis of N-formyl-L-kynurenine to L-kynurenine, the second step in the kynurenine pathway of tryptophan degradation. Kynurenine may be further oxidized to nicotinic acid, NAD(H) and NADP(H). Required for elimination of toxic metabolites. The chain is Kynurenine formamidase from Scheffersomyces stipitis (strain ATCC 58785 / CBS 6054 / NBRC 10063 / NRRL Y-11545) (Yeast).